Reading from the N-terminus, the 334-residue chain is Ornithine carbamoyltransferase (334 aa).

Carbamoyl phosphate-binding positions include 57 to 60 (STRT), glutamine 84, arginine 108, and 135 to 138 (HPTQ). L-ornithine-binding positions include asparagine 169, aspartate 233, and 237–238 (SM). Carbamoyl phosphate is bound by residues 275-276 (CL) and arginine 320.

Belongs to the aspartate/ornithine carbamoyltransferase superfamily. OTCase family.

It localises to the cytoplasm. It catalyses the reaction carbamoyl phosphate + L-ornithine = L-citrulline + phosphate + H(+). It functions in the pathway amino-acid biosynthesis; L-arginine biosynthesis; L-arginine from L-ornithine and carbamoyl phosphate: step 1/3. Functionally, reversibly catalyzes the transfer of the carbamoyl group from carbamoyl phosphate (CP) to the N(epsilon) atom of ornithine (ORN) to produce L-citrulline. The sequence is that of Ornithine carbamoyltransferase from Vibrio cholerae serotype O1 (strain ATCC 39315 / El Tor Inaba N16961).